The following is a 515-amino-acid chain: 2-isopropylmalate synthase (515 aa).

Positions 4–266 constitute a Pyruvate carboxyltransferase domain; sequence INIFDTTLRD…ETRLNLQEIK (263 aa). The Mn(2+) site is built by Asp-13, His-201, His-203, and Asn-237. Residues 391–515 are regulatory domain; that stretch reads QLSSLQVQYG…RAENQKVAMQ (125 aa).

The protein belongs to the alpha-IPM synthase/homocitrate synthase family. LeuA type 1 subfamily. Homodimer. The cofactor is Mn(2+).

It localises to the cytoplasm. It catalyses the reaction 3-methyl-2-oxobutanoate + acetyl-CoA + H2O = (2S)-2-isopropylmalate + CoA + H(+). Its pathway is amino-acid biosynthesis; L-leucine biosynthesis; L-leucine from 3-methyl-2-oxobutanoate: step 1/4. Catalyzes the condensation of the acetyl group of acetyl-CoA with 3-methyl-2-oxobutanoate (2-ketoisovalerate) to form 3-carboxy-3-hydroxy-4-methylpentanoate (2-isopropylmalate). This Geobacillus sp. (strain WCH70) protein is 2-isopropylmalate synthase.